A 271-amino-acid chain; its full sequence is Calretinin (271 aa).

6 consecutive EF-hand domains span residues 16-51 (LTAS…LEKA), 63-98 (NFGE…EENF), 107-142 (GSSA…LLKK), 151-186 (KLQE…QENF), 195-230 (LTSE…LYEK), and 235-270 (MNIQ…SEPP). Residues Asp29, Asp31, Asn33, Tyr35, Glu40, Asp76, Asn78, Asp80, Lys82, Glu87, Asp120, Asp122, Ser124, Tyr126, Glu131, Asp164, Asn166, Asp168, Lys170, Glu175, Asp208, Asp210, Ser212, Tyr214, and Glu219 each coordinate Ca(2+). The residue at position 214 (Tyr214) is a Phosphotyrosine.

The protein belongs to the calbindin family. Widely expressed in central nervous system. Expressed in type I unipolar brush cells of the cerebellum (at protein level).

It localises to the synapse. It is found in the cell projection. The protein resides in the dendrite. Calcium-binding protein involved in calcium homeostasis and signal transduction. It plays a critical role in buffering intracellular calcium levels and modulating calcium-dependent signaling pathways. Predominantly expressed in specific neuronal populations, influences synaptic plasticity and neuronal excitability, contributing to learning and memory. During embryonic development, it facilitates neuronal differentiation and maturation. The protein is Calretinin (Calb2) of Mus musculus (Mouse).